The sequence spans 301 residues: Sulfate adenylyltransferase subunit 2 (301 aa).

It belongs to the PAPS reductase family. CysD subfamily. Heterodimer composed of CysD, the smaller subunit, and CysN.

It catalyses the reaction sulfate + ATP + H(+) = adenosine 5'-phosphosulfate + diphosphate. It functions in the pathway sulfur metabolism; hydrogen sulfide biosynthesis; sulfite from sulfate: step 1/3. Functionally, with CysN forms the ATP sulfurylase (ATPS) that catalyzes the adenylation of sulfate producing adenosine 5'-phosphosulfate (APS) and diphosphate, the first enzymatic step in sulfur assimilation pathway. APS synthesis involves the formation of a high-energy phosphoric-sulfuric acid anhydride bond driven by GTP hydrolysis by CysN coupled to ATP hydrolysis by CysD. This is Sulfate adenylyltransferase subunit 2 from Trichlorobacter lovleyi (strain ATCC BAA-1151 / DSM 17278 / SZ) (Geobacter lovleyi).